The chain runs to 160 residues: Type IV major fimbrial protein FimA (160 aa).

The propeptide at 1-7 is leader sequence; that stretch reads MKSLQKG. F8 is modified (N-methylphenylalanine). A helical transmembrane segment spans residues 8–28; it reads FTLIELMIVVAIIGILAAIAI.

This sequence belongs to the N-Me-Phe pilin family. In terms of assembly, the pili are polar flexible filaments of about 5.4 nanometers diameter and 2.5 micrometers average length; they consist of only a single polypeptide chain arranged in a helical configuration of five subunits per turn in the assembled pilus.

The protein resides in the fimbrium. It is found in the membrane. Its function is as follows. Major component of the type IV fimbriae that plays an essential role in twitching motility, natural transformation, and protease secretion. The chain is Type IV major fimbrial protein FimA (fimA) from Dichelobacter nodosus (Bacteroides nodosus).